Here is a 211-residue protein sequence, read N- to C-terminus: C-type lectin domain family 2 member L (211 aa).

Positions methionine 1–threonine 53 are disordered. The segment covering arginine 10 to arginine 28 has biased composition (pro residues). Position 29 is a phosphoserine (serine 29). The helical transmembrane segment at leucine 66–alanine 86 threads the bilayer. 3 cysteine pairs are disulfide-bonded: cysteine 97–cysteine 108, cysteine 125–cysteine 205, and cysteine 184–cysteine 197. In terms of domain architecture, C-type lectin spans tyrosine 104–serine 206.

Its subcellular location is the membrane. This chain is C-type lectin domain family 2 member L (Clec2l), found in Rattus norvegicus (Rat).